We begin with the raw amino-acid sequence, 349 residues long: GTPase Obg (349 aa).

Positions 1–159 (MKFLDQAKVY…LWIWLRLKLI (159 aa)) constitute an Obg domain. The region spanning 160-327 (ADAGLIGLPN…VLRALMRVVQ (168 aa)) is the OBG-type G domain. Residues 166–173 (GLPNAGKS), 191–195 (FTTLH), 212–215 (DIPG), 279–282 (SQID), and 308–310 (SSA) contribute to the GTP site. Positions 173 and 193 each coordinate Mg(2+).

Belongs to the TRAFAC class OBG-HflX-like GTPase superfamily. OBG GTPase family. As to quaternary structure, monomer. Requires Mg(2+) as cofactor.

The protein localises to the cytoplasm. In terms of biological role, an essential GTPase which binds GTP, GDP and possibly (p)ppGpp with moderate affinity, with high nucleotide exchange rates and a fairly low GTP hydrolysis rate. Plays a role in control of the cell cycle, stress response, ribosome biogenesis and in those bacteria that undergo differentiation, in morphogenesis control. This Chelativorans sp. (strain BNC1) protein is GTPase Obg.